We begin with the raw amino-acid sequence, 153 residues long: Large ribosomal subunit protein bL27m (153 aa).

Residues 1–37 (MINQGLFIRVNNFQLLKASLAYKKASNILTFPPIRTS) constitute a mitochondrion transit peptide. The disordered stretch occupies residues 34–57 (IRTSTKHGGGSSKNTGDSAGRRLG).

It belongs to the bacterial ribosomal protein bL27 family. In terms of assembly, component of the mitochondrial large ribosomal subunit (mt-LSU). Mature yeast 74S mitochondrial ribosomes consist of a small (37S) and a large (54S) subunit. The 37S small subunit contains a 15S ribosomal RNA (15S mt-rRNA) and at least 32 different proteins. The 54S large subunit contains a 21S rRNA (21S mt-rRNA) and at least 45 different proteins.

It is found in the mitochondrion. Component of the mitochondrial ribosome (mitoribosome), a dedicated translation machinery responsible for the synthesis of mitochondrial genome-encoded proteins, including at least some of the essential transmembrane subunits of the mitochondrial respiratory chain. The mitoribosomes are attached to the mitochondrial inner membrane and translation products are cotranslationally integrated into the membrane. The protein is Large ribosomal subunit protein bL27m (mrp7) of Schizosaccharomyces pombe (strain 972 / ATCC 24843) (Fission yeast).